The chain runs to 323 residues: Biotin synthase (323 aa).

The 219-residue stretch at 46-264 (TEIQLSSLLS…IAVARITMPR (219 aa)) folds into the Radical SAM core domain. The [4Fe-4S] cluster site is built by C61, C65, and C68. Residues C105, C136, C196, and R268 each contribute to the [2Fe-2S] cluster site.

The protein belongs to the radical SAM superfamily. Biotin synthase family. As to quaternary structure, homodimer. It depends on [4Fe-4S] cluster as a cofactor. [2Fe-2S] cluster is required as a cofactor.

It carries out the reaction (4R,5S)-dethiobiotin + (sulfur carrier)-SH + 2 reduced [2Fe-2S]-[ferredoxin] + 2 S-adenosyl-L-methionine = (sulfur carrier)-H + biotin + 2 5'-deoxyadenosine + 2 L-methionine + 2 oxidized [2Fe-2S]-[ferredoxin]. Its pathway is cofactor biosynthesis; biotin biosynthesis; biotin from 7,8-diaminononanoate: step 2/2. Functionally, catalyzes the conversion of dethiobiotin (DTB) to biotin by the insertion of a sulfur atom into dethiobiotin via a radical-based mechanism. In Bordetella avium (strain 197N), this protein is Biotin synthase.